Here is a 283-residue protein sequence, read N- to C-terminus: Protein/nucleic acid deglycase HchA (283 aa).

3 residues coordinate Zn(2+): H86, E91, and H123. C185 (nucleophile) is an active-site residue.

The protein belongs to the peptidase C56 family. HchA subfamily. In terms of assembly, homodimer.

The protein resides in the cytoplasm. It catalyses the reaction N(omega)-(1-hydroxy-2-oxopropyl)-L-arginyl-[protein] + H2O = lactate + L-arginyl-[protein] + H(+). The catalysed reaction is N(6)-(1-hydroxy-2-oxopropyl)-L-lysyl-[protein] + H2O = lactate + L-lysyl-[protein] + H(+). The enzyme catalyses S-(1-hydroxy-2-oxopropyl)-L-cysteinyl-[protein] + H2O = lactate + L-cysteinyl-[protein] + H(+). It carries out the reaction N(omega)-(1-hydroxy-2-oxoethyl)-L-arginyl-[protein] + H2O = L-arginyl-[protein] + glycolate + H(+). It catalyses the reaction N(6)-(1-hydroxy-2-oxoethyl)-L-lysyl-[protein] + H2O = glycolate + L-lysyl-[protein] + H(+). The catalysed reaction is S-(1-hydroxy-2-oxoethyl)-L-cysteinyl-[protein] + H2O = glycolate + L-cysteinyl-[protein] + H(+). The enzyme catalyses N(2)-(1-hydroxy-2-oxopropyl)-dGTP + H2O = lactate + dGTP + H(+). It carries out the reaction N(2)-(1-hydroxy-2-oxopropyl)-GTP + H2O = lactate + GTP + H(+). It catalyses the reaction N(2)-(1-hydroxy-2-oxopropyl)-GDP + H2O = lactate + GDP + H(+). The catalysed reaction is N(2)-(1-hydroxy-2-oxopropyl)-GMP + H2O = lactate + GMP + H(+). The enzyme catalyses N(2)-(1-hydroxy-2-oxoethyl)-dGTP + H2O = dGTP + glycolate + H(+). It carries out the reaction N(2)-(1-hydroxy-2-oxoethyl)-GTP + H2O = glycolate + GTP + H(+). It catalyses the reaction N(2)-(1-hydroxy-2-oxoethyl)-GDP + H2O = glycolate + GDP + H(+). The catalysed reaction is N(2)-(1-hydroxy-2-oxoethyl)-GMP + H2O = glycolate + GMP + H(+). The enzyme catalyses an N(2)-(1-hydroxy-2-oxopropyl)-guanosine in RNA + H2O = a guanosine in RNA + lactate + H(+). It carries out the reaction an N(2)-(1-hydroxy-2-oxopropyl)-2'-deoxyguanosine in DNA + H2O = a 2'-deoxyguanosine in DNA + lactate + H(+). It catalyses the reaction an N(2)-(1-hydroxy-2-oxoethyl)-guanosine in RNA + H2O = a guanosine in RNA + glycolate + H(+). The catalysed reaction is an N(2)-(1-hydroxy-2-oxoethyl)-2'-deoxyguanosine in DNA + H2O = a 2'-deoxyguanosine in DNA + glycolate + H(+). Its function is as follows. Protein and nucleotide deglycase that catalyzes the deglycation of the Maillard adducts formed between amino groups of proteins or nucleotides and reactive carbonyl groups of glyoxals. Thus, functions as a protein deglycase that repairs methylglyoxal- and glyoxal-glycated proteins, and releases repaired proteins and lactate or glycolate, respectively. Deglycates cysteine, arginine and lysine residues in proteins, and thus reactivates these proteins by reversing glycation by glyoxals. Acts on early glycation intermediates (hemithioacetals and aminocarbinols), preventing the formation of Schiff bases and advanced glycation endproducts (AGE). Also functions as a nucleotide deglycase able to repair glycated guanine in the free nucleotide pool (GTP, GDP, GMP, dGTP) and in DNA and RNA. Is thus involved in a major nucleotide repair system named guanine glycation repair (GG repair), dedicated to reversing methylglyoxal and glyoxal damage via nucleotide sanitization and direct nucleic acid repair. Plays an important role in protecting cells from carbonyl stress. The chain is Protein/nucleic acid deglycase HchA from Escherichia coli O45:K1 (strain S88 / ExPEC).